The sequence spans 120 residues: ATP-dependent Clp protease adapter protein ClpS (120 aa).

The protein belongs to the ClpS family. Binds to the N-terminal domain of the chaperone ClpA.

In terms of biological role, involved in the modulation of the specificity of the ClpAP-mediated ATP-dependent protein degradation. The protein is ATP-dependent Clp protease adapter protein ClpS of Pseudomonas savastanoi pv. phaseolicola (strain 1448A / Race 6) (Pseudomonas syringae pv. phaseolicola (strain 1448A / Race 6)).